A 160-amino-acid polypeptide reads, in one-letter code: Large ribosomal subunit protein uL22c (160 aa).

Belongs to the universal ribosomal protein uL22 family. In terms of assembly, part of the 50S ribosomal subunit.

The protein localises to the plastid. It is found in the chloroplast. In terms of biological role, this protein binds specifically to 23S rRNA. Its function is as follows. The globular domain of the protein is located near the polypeptide exit tunnel on the outside of the subunit, while an extended beta-hairpin is found that lines the wall of the exit tunnel in the center of the 70S ribosome. This chain is Large ribosomal subunit protein uL22c (rpl22), found in Draba nemorosa (Woodland whitlowgrass).